Here is a 315-residue protein sequence, read N- to C-terminus: Serine/threonine-protein phosphatase PP2A catalytic subunit 2 (315 aa).

Mn(2+)-binding residues include aspartate 62, histidine 64, aspartate 90, and asparagine 122. The active-site Proton donor is histidine 123. Mn(2+) is bound by residues histidine 172 and histidine 247. The segment at 294–315 (QFEPAPRENEPHTTRRVPDYFL) is disordered. The segment covering 298–315 (APRENEPHTTRRVPDYFL) has biased composition (basic and acidic residues). At leucine 315 the chain carries Leucine methyl ester.

This sequence belongs to the PPP phosphatase family. PP-2A subfamily. Mn(2+) serves as cofactor. In terms of processing, reversibly methyl esterified on Leu-315 by leucine carboxyl methyltransferase 1 (PPM1) and protein phosphatase methylesterase 1 (PPE1). Carboxyl methylation influences the affinity of the catalytic subunit for the different regulatory subunits, thereby modulating the PP2A holoenzyme's substrate specificity, enzyme activity and cellular localization.

The enzyme catalyses O-phospho-L-seryl-[protein] + H2O = L-seryl-[protein] + phosphate. It carries out the reaction O-phospho-L-threonyl-[protein] + H2O = L-threonyl-[protein] + phosphate. The chain is Serine/threonine-protein phosphatase PP2A catalytic subunit 2 (Ppn2) from Paramecium tetraurelia.